Consider the following 676-residue polypeptide: Probable potassium transport system protein Kup (676 aa).

Helical transmembrane passes span 14–34 (GLLI…LYVM), 56–76 (ISLI…IIAL), 97–117 (AAWL…DGTL), 142–162 (VSNQ…LFSI), 173–193 (AFGP…LINI), 219–239 (AGFA…ALYS), 252–272 (SWPF…VWIL), 296–316 (LASI…LITG), 345–365 (IYIP…VLFF), 376–396 (GLSI…WLVL), 402–422 (LANL…MGSS), and 429–449 (GGYV…VWYF).

The protein belongs to the HAK/KUP transporter (TC 2.A.72) family.

The protein resides in the cell membrane. The enzyme catalyses K(+)(in) + H(+)(in) = K(+)(out) + H(+)(out). Functionally, transport of potassium into the cell. Likely operates as a K(+):H(+) symporter. This is Probable potassium transport system protein Kup from Lactobacillus delbrueckii subsp. bulgaricus (strain ATCC BAA-365 / Lb-18).